Here is a 307-residue protein sequence, read N- to C-terminus: Potassium channel subfamily K member 7 (307 aa).

At 1–10 (MGSLKPWARY) the chain is on the cytoplasmic side. Residues 11–31 (LLLLMAHLLAMGLGAVVLQAL) traverse the membrane as a helical segment. Residue Asn83 is glycosylated (N-linked (GlcNAc...) asparagine). An intramembrane region (pore-forming) is located at residues 92 to 118 (LPSALLFTASILTTTGYGHMAPLSSGG). Residues 120-140 (AFCVVYAALGLPASLALVAAL) form a helical membrane-spanning segment. Topologically, residues 141–172 (RHCLLPVFSRPGDWVAIRWQLAPAQAALLQAA) are cytoplasmic. A helical transmembrane segment spans residues 173 to 193 (GLGLLVACVFMLLPALVLWGV). Positions 199-227 (LLEAIYFCFGSLSTIGLGDLLPAHGRGLH) form an intramembrane region, pore-forming. A helical membrane pass occupies residues 233 to 253 (LGQFALLGYLLLGLLAMLLAV). At 254-307 (ETFSELPQVRAMVKFFGPSGSRTDEDQDGILGQDELALSTVLPDAPVLGPTTPA) the chain is on the cytoplasmic side.

Belongs to the two pore domain potassium channel (TC 1.A.1.8) family. Homodimer. Detected in embryo, eye, lung and liver. Weakly expressed in colon, testis, atria, kidney, intestine, bladder, uterus, ovary, salivary gland, thymus and brain stem. Not detected in brain, cerebellum, spinal cord, heart, ventricle, skeletal muscle, liver, placenta and pancreas. In the eye, highly expressed in the retinal ganglion cell layer and inner nuclear layer.

Its subcellular location is the membrane. Probable potassium channel subunit. No channel activity observed in vitro as protein remains in the endoplasmic reticulum. May need to associate with an as yet unknown partner in order to reach the plasma membrane. In Mus musculus (Mouse), this protein is Potassium channel subfamily K member 7 (Kcnk7).